A 328-amino-acid chain; its full sequence is Ribosomal RNA large subunit methyltransferase F (328 aa).

The segment at 1–38 is disordered; sequence MTDTPKPPRKKPQRPAKPAAPREKATLHPRNRHQGHYD.

It belongs to the methyltransferase superfamily. METTL16/RlmF family.

It is found in the cytoplasm. The enzyme catalyses adenosine(1618) in 23S rRNA + S-adenosyl-L-methionine = N(6)-methyladenosine(1618) in 23S rRNA + S-adenosyl-L-homocysteine + H(+). Specifically methylates the adenine in position 1618 of 23S rRNA. The sequence is that of Ribosomal RNA large subunit methyltransferase F from Pseudomonas syringae pv. tomato (strain ATCC BAA-871 / DC3000).